The chain runs to 1426 residues: Phospholipid-transporting ATPase VD (1426 aa).

The Cytoplasmic portion of the chain corresponds to 1-97 (MTEALQWARY…PRNLFEQFHR (97 aa)). A helical transmembrane segment spans residues 98-118 (AANLYFLFLVVLNWVPLVEAF). Residues 119 to 121 (QKE) are Exoplasmic loop-facing. A helical membrane pass occupies residues 122–142 (ITMLPLVVVLTIIAIKDGLED). Residues 143-321 (YRKYKIDKQI…SKLERRANTD (179 aa)) lie on the Cytoplasmic side of the membrane. Residues 322–342 (VLWCVMLLVIMCLTGAVGHGI) form a helical membrane-spanning segment. Topologically, residues 343 to 365 (WLSRYEKMHFFNVPEPDGHIISP) are exoplasmic loop. The helical transmembrane segment at 366-386 (LLAGFYMFWTMIILLQVLIPI) threads the bilayer. The Cytoplasmic segment spans residues 387 to 1113 (SLYVSIEIVK…HWCYTRLSNM (727 aa)). The 4-aspartylphosphate intermediate role is filled by aspartate 438. Positions 438, 439, and 440 each coordinate ATP. Aspartate 438 contacts Mg(2+). Residue threonine 440 coordinates Mg(2+). The segment at 506–531 (NGPLGNKPSNHLAGSSFTLGSGEGAS) is disordered. Residues 512-524 (KPSNHLAGSSFTL) show a composition bias toward polar residues. ATP is bound by residues glutamate 730, phenylalanine 772, lysine 796, arginine 840, threonine 920, glycine 921, aspartate 922, 996 to 1003 (GLIITGKT), arginine 1030, and lysine 1036. Aspartate 1056 is a binding site for Mg(2+). ATP is bound by residues asparagine 1059 and aspartate 1060. Aspartate 1060 contacts Mg(2+). A helical membrane pass occupies residues 1114-1134 (ILYFFYKNVAYVNLLFWYQFF). Topologically, residues 1135-1145 (CGFSGTSMTDY) are exoplasmic loop. Residues 1146 to 1166 (WVLIFFNLLFTSAPPVIYGVL) form a helical membrane-spanning segment. Topologically, residues 1167–1195 (EKDVSAETLMQLPELYRSGQKSEAYLPHT) are cytoplasmic. A helical membrane pass occupies residues 1196-1216 (FWITLLDAFYQSLVCFFVPYF). The Exoplasmic loop segment spans residues 1217–1224 (TYQGSDTD). Residues 1225–1245 (IFAFGNPLNTAALFIVLLHLV) traverse the membrane as a helical segment. Residues 1246-1252 (IESKSLT) are Cytoplasmic-facing. Residues 1253-1273 (WIHLLVIIGSILSYFLFAIVF) traverse the membrane as a helical segment. Residues 1274–1292 (GAMCVTCNPPSNPYWIMQE) lie on the Exoplasmic loop side of the membrane. The helical transmembrane segment at 1293–1313 (HMLDPVFYLVCILTTSIALLP) threads the bilayer. The Cytoplasmic segment spans residues 1314-1426 (RFVYRVLQGS…MAGPSKGKES (113 aa)). An ATP-binding site is contributed by 1364–1371 (ANQSAGKS).

The protein belongs to the cation transport ATPase (P-type) (TC 3.A.3) family. Type IV subfamily. Component of a P4-ATPase flippase complex which consists of a catalytic alpha subunit ATP10A and an accessory beta subunit TMEM30A. Requires Mg(2+) as cofactor. Post-translationally, autophosphorylated at the conserved aspartate of the P-type ATPase signature sequence. Expressed in placenta and, to a lesser extent, in kidney.

The protein localises to the cell membrane. It localises to the endoplasmic reticulum membrane. It carries out the reaction ATP + H2O + phospholipidSide 1 = ADP + phosphate + phospholipidSide 2.. The enzyme catalyses a beta-D-glucosyl-(1&lt;-&gt;1')-N-acylsphing-4-enine(out) + ATP + H2O = a beta-D-glucosyl-(1&lt;-&gt;1')-N-acylsphing-4-enine(in) + ADP + phosphate + H(+). Its function is as follows. Catalytic component of a P4-ATPase flippase complex, which catalyzes the hydrolysis of ATP coupled to the transport of glucosylceramide (GlcCer) from the outer to the inner leaflet of the plasma membrane. In Homo sapiens (Human), this protein is Phospholipid-transporting ATPase VD.